The primary structure comprises 283 residues: Non-selective voltage-gated ion channel VDAC1 (283 aa).

Position 2 is an N-acetylalanine (A2). K12 provides a ligand contact to ATP. K12 participates in a covalent cross-link: Glycyl lysine isopeptide (Lys-Gly) (interchain with G-Cter in ubiquitin). Position 13 is a phosphoserine (S13). T19 bears the Phosphothreonine mark. ATP is bound at residue K20. Residue K20 is modified to N6-acetyllysine; alternate. K20 carries the N6-succinyllysine; alternate modification. K20 participates in a covalent cross-link: Glycyl lysine isopeptide (Lys-Gly) (interchain with G-Cter in ubiquitin); alternate. 2 beta stranded membrane passes run 26 to 35 (LIKLDLKTKS) and 39 to 47 (LEFTSSGSA). Glycyl lysine isopeptide (Lys-Gly) (interchain with G-Cter in ubiquitin) cross-links involve residues K53 and K61. The beta stranded transmembrane segment at 54–64 (VTGSLETKYRW) threads the bilayer. Y67 carries the post-translational modification Phosphotyrosine. 3 beta stranded membrane-spanning segments follow: residues 69–76 (LTFTEKWN), 80–89 (TLGTEITVED), and 95–104 (LKLTFDSSFS). T107 bears the Phosphothreonine mark. K109 carries the post-translational modification N6-acetyllysine; alternate. K109 is covalently cross-linked (Glycyl lysine isopeptide (Lys-Gly) (interchain with G-Cter in ubiquitin); alternate). Residue K110 forms a Glycyl lysine isopeptide (Lys-Gly) (interchain with G-Cter in ubiquitin) linkage. Beta stranded transmembrane passes span 111–120 (NAKIKTGYKR), 123–130 (INLGCDVD), 137–145 (SIRGALVLG), and 150–158 (LAGYQMNFE). K161 is covalently cross-linked (Glycyl lysine isopeptide (Lys-Gly) (interchain with G-Cter in ubiquitin)). Transmembrane regions (beta stranded) follow at residues 163–175 (RVTQ…GYKT), 178–185 (FQLHTNVN), 189–198 (EFGGSIYQKV), 202–211 (LETAVNLAWT), 218–227 (RFGIAAKYQI), and 231–238 (ACFSAKVN). S193 is modified (phosphoserine; by NEK1). S240 is subject to Phosphoserine. NAD(+) is bound at residue 242–244 (LIG). Residues 242–251 (LIGLGYTQTL) traverse the membrane as a beta stranded segment. K252 bears the N6-acetyllysine mark. A beta stranded membrane pass occupies residues 254–263 (GIKLTLSALL). Residue 260 to 264 (SALLD) coordinates NAD(+). Position 266 is an N6-acetyllysine; alternate (K266). Residue K266 forms a Glycyl lysine isopeptide (Lys-Gly) (interchain with G-Cter in ubiquitin); alternate linkage. A beta stranded membrane pass occupies residues 273-282 (HKLGLGLEFQ). Residue K274 forms a Glycyl lysine isopeptide (Lys-Gly) (interchain with G-Cter in ubiquitin) linkage.

It belongs to the eukaryotic mitochondrial porin family. In terms of assembly, homodimer and homotrimer; in response to cyclic AMP or calcium; oligomerization is required for scramblase activity. Component of the mitochondrial permeability transition pore complex (mPTPC), at least composed of SPG7, VDAC1 and PPIF. Interacts with SPG7, NIPSNAP2 and SLC25A30. Interacts with hexokinases including HK1. The HK1-VDAC1 complex interacts with ATF2. Interacts with BCL2L1. Interacts with BAK1. Interacts with RTL10/BOP (via BH3 domain). Interacts with amyloid-beta and APP; induces VDAC1 dephosphorylation. Interacts with TMEM41B. Interacts with BCAP31. Interacts with HSPA9; this interaction couples ITPR1 to VDAC1. Phosphorylation at Ser-193 by NEK1 promotes the closed conformational state preventing excessive mitochondrial membrane permeability and subsequent apoptotic cell death after injury. Phosphorylation by the AKT-GSK3B axis stabilizes the protein probably by preventing ubiquitin-mediated proteasomal degradation. Post-translationally, ubiquitinated. Undergoes monoubiquitination and polyubiquitination by PRKN; monoubiquitination at Lys-274 inhibits apoptosis, whereas polyubiquitination leads to its degradation and promotes mitophagy. Deubiquitinated by USP30. In terms of tissue distribution, predominantly in brain astrocytes.

It localises to the mitochondrion outer membrane. The protein localises to the cell membrane. Its subcellular location is the membrane raft. It carries out the reaction chloride(in) = chloride(out). The catalysed reaction is K(+)(in) = K(+)(out). The enzyme catalyses ATP(in) = ATP(out). It catalyses the reaction Ca(2+)(in) = Ca(2+)(out). It carries out the reaction Na(+)(in) = Na(+)(out). The catalysed reaction is Mg(2+)(in) = Mg(2+)(out). The enzyme catalyses L-glutamate(out) = L-glutamate(in). It catalyses the reaction dopamine(out) = dopamine(in). It carries out the reaction acetylcholine(in) = acetylcholine(out). The catalysed reaction is Fe(III)-[cytochrome c](out) = Fe(III)-[cytochrome c](in). The enzyme catalyses a 1,2-diacyl-sn-glycero-3-phosphocholine(in) = a 1,2-diacyl-sn-glycero-3-phosphocholine(out). It catalyses the reaction a 1,2-diacyl-sn-glycero-3-phospho-L-serine(in) = a 1,2-diacyl-sn-glycero-3-phospho-L-serine(out). Inhibited by nitric oxide. Functionally, non-selective voltage-gated ion channel that mediates the transport of anions and cations through the mitochondrion outer membrane and plasma membrane. The channel at the outer mitochondrial membrane allows diffusion of small hydrophilic molecules; in the plasma membrane it is involved in cell volume regulation and apoptosis. It adopts an open conformation at low or zero membrane potential and a closed conformation at potentials above 30-40 mV. The open state has a weak anion selectivity whereas the closed state is cation-selective. Binds various signaling molecules, including the sphingolipid ceramide, the phospholipid phosphatidylcholine, and the sterols cholesterol and oxysterol. In depolarized mitochondria, acts downstream of PRKN and PINK1 to promote mitophagy or prevent apoptosis; polyubiquitination by PRKN promotes mitophagy, while monoubiquitination by PRKN decreases mitochondrial calcium influx which ultimately inhibits apoptosis. May participate in the formation of the permeability transition pore complex (PTPC) responsible for the release of mitochondrial products that triggers apoptosis. May mediate ATP export from cells. Part of a complex composed of HSPA9, ITPR1 and VDAC1 that regulates mitochondrial calcium-dependent apoptosis by facilitating calcium transport from the ER lumen to the mitochondria intermembrane space thus providing calcium for the downstream calcium channel MCU that directly releases it into mitochondria matrix. Mediates cytochrome c efflux. Its function is as follows. Catalyzes the scrambling of phospholipids across the outer mitochondrial membrane; the mechanism is unrelated to channel activity and is capable of translocating both anionic and zwitterionic phospholipids. In Bos taurus (Bovine), this protein is Non-selective voltage-gated ion channel VDAC1.